Reading from the N-terminus, the 303-residue chain is Glycine--tRNA ligase alpha subunit (303 aa).

Belongs to the class-II aminoacyl-tRNA synthetase family. As to quaternary structure, tetramer of two alpha and two beta subunits.

It localises to the cytoplasm. The enzyme catalyses tRNA(Gly) + glycine + ATP = glycyl-tRNA(Gly) + AMP + diphosphate. In Enterobacter sp. (strain 638), this protein is Glycine--tRNA ligase alpha subunit.